The chain runs to 573 residues: Urease subunit alpha 2 (573 aa).

The Urease domain maps to 135–573; it reads GGMDTHVHYI…ISLNQLYFFS (439 aa). The Ni(2+) site is built by His140, His142, and Lys223. The residue at position 223 (Lys223) is an N6-carboxylysine. His225 lines the substrate pocket. His252 and His278 together coordinate Ni(2+). His326 serves as the catalytic Proton donor. Asp366 provides a ligand contact to Ni(2+).

It belongs to the metallo-dependent hydrolases superfamily. Urease alpha subunit family. In terms of assembly, heterotrimer of UreA (gamma), UreB (beta) and UreC (alpha) subunits. Three heterotrimers associate to form the active enzyme. Requires Ni cation as cofactor. Carboxylation allows a single lysine to coordinate two nickel ions.

It localises to the cytoplasm. It catalyses the reaction urea + 2 H2O + H(+) = hydrogencarbonate + 2 NH4(+). Its pathway is nitrogen metabolism; urea degradation; CO(2) and NH(3) from urea (urease route): step 1/1. Disrupting the ure2 operon has no effect on urease activity or pathogen survival in BALB/c mice when administered orally. This is Urease subunit alpha 2 from Brucella abortus (strain 2308).